The chain runs to 330 residues: B3 domain-containing protein REM21 (330 aa).

Residues 23–116 constitute a DNA-binding region (TF-B3); sequence PRFFTVFLSH…SYEVSIYGRG (94 aa). A compositionally biased stretch (acidic residues) spans 129 to 138; it reads EISDDTEDDN. The segment at 129-169 is disordered; it reads EISDDTEDDNVSLHSPSNVSLDSLSNDSHHSTSNVSLRSLS. Positions 142–162 are enriched in low complexity; it reads HSPSNVSLDSLSNDSHHSTSN.

The protein localises to the nucleus. The chain is B3 domain-containing protein REM21 (REM21) from Arabidopsis thaliana (Mouse-ear cress).